We begin with the raw amino-acid sequence, 933 residues long: Phosphoenolpyruvate carboxylase (933 aa).

Residues His158 and Lys592 contribute to the active site.

It belongs to the PEPCase type 1 family. Requires Mg(2+) as cofactor.

The catalysed reaction is oxaloacetate + phosphate = phosphoenolpyruvate + hydrogencarbonate. Its function is as follows. Forms oxaloacetate, a four-carbon dicarboxylic acid source for the tricarboxylic acid cycle. The polypeptide is Phosphoenolpyruvate carboxylase (Nitrosomonas eutropha (strain DSM 101675 / C91 / Nm57)).